The chain runs to 198 residues: ATP-dependent Clp protease proteolytic subunit (198 aa).

The Nucleophile role is filled by Ser103. His128 is an active-site residue.

This sequence belongs to the peptidase S14 family. In terms of assembly, fourteen ClpP subunits assemble into 2 heptameric rings which stack back to back to give a disk-like structure with a central cavity, resembling the structure of eukaryotic proteasomes.

It localises to the cytoplasm. It carries out the reaction Hydrolysis of proteins to small peptides in the presence of ATP and magnesium. alpha-casein is the usual test substrate. In the absence of ATP, only oligopeptides shorter than five residues are hydrolyzed (such as succinyl-Leu-Tyr-|-NHMec, and Leu-Tyr-Leu-|-Tyr-Trp, in which cleavage of the -Tyr-|-Leu- and -Tyr-|-Trp bonds also occurs).. Functionally, cleaves peptides in various proteins in a process that requires ATP hydrolysis. Has a chymotrypsin-like activity. Plays a major role in the degradation of misfolded proteins. The polypeptide is ATP-dependent Clp protease proteolytic subunit (Ruthia magnifica subsp. Calyptogena magnifica).